A 122-amino-acid chain; its full sequence is Large ribosomal subunit protein uL14 (122 aa).

It belongs to the universal ribosomal protein uL14 family. In terms of assembly, part of the 50S ribosomal subunit. Forms a cluster with proteins L3 and L19. In the 70S ribosome, L14 and L19 interact and together make contacts with the 16S rRNA in bridges B5 and B8.

Functionally, binds to 23S rRNA. Forms part of two intersubunit bridges in the 70S ribosome. The polypeptide is Large ribosomal subunit protein uL14 (Kocuria rhizophila (strain ATCC 9341 / DSM 348 / NBRC 103217 / DC2201)).